The following is a 378-amino-acid chain: MKVLAAMSGGVDSAVAAARTVEAGHEVVGVHLALSRMPGTLRTGSRGCCTIEDSTDAWKACEKLGIPYYVWDFSERFKEDVVDDFIAEYAAGRTPNPCMRCNERIKFAALLEKAIALGFDAVCTGHYARVAQDEDGNYELHRASDWAKDQSYVLGVLTHEQLKHSMFPLSDAQTKAEVRAEADRRGLSVAKKPDSHDICFISDGDTRGWLAEKIDMTPGEILDQSGAKVGTHEGANAFTVGQRRGLKLGTPAADGKPRFVLEIRPKENTVVVGPEQMLAMNEIRGIKISWAGEPIAEVGAGTEFDCMAQVRAHGDPVPARAFVTTDDDGAPLLVVNLIDPLRGVAPGQTVVLYQGTRVLGQATIDTARSLVSSSTKVD.

ATP contacts are provided by residues 6–13 (AMSGGVDS) and Leu32. Cys101 (nucleophile) is an active-site residue. Cys101 and Cys199 are oxidised to a cystine. Gly125 contacts ATP. The interaction with tRNA stretch occupies residues 148-150 (KDQ). Cys199 serves as the catalytic Cysteine persulfide intermediate.

It belongs to the MnmA/TRMU family.

The protein resides in the cytoplasm. It catalyses the reaction S-sulfanyl-L-cysteinyl-[protein] + uridine(34) in tRNA + AH2 + ATP = 2-thiouridine(34) in tRNA + L-cysteinyl-[protein] + A + AMP + diphosphate + H(+). Its function is as follows. Catalyzes the 2-thiolation of uridine at the wobble position (U34) of tRNA, leading to the formation of s(2)U34. The polypeptide is tRNA-specific 2-thiouridylase MnmA (Renibacterium salmoninarum (strain ATCC 33209 / DSM 20767 / JCM 11484 / NBRC 15589 / NCIMB 2235)).